The sequence spans 341 residues: L-threonine 3-dehydrogenase (341 aa).

A Zn(2+)-binding site is contributed by cysteine 38. Catalysis depends on charge relay system residues threonine 40 and histidine 43. Histidine 63, glutamate 64, cysteine 93, cysteine 96, cysteine 99, and cysteine 107 together coordinate Zn(2+). NAD(+) contacts are provided by residues isoleucine 175, aspartate 195, arginine 200, 262–264 (LGI), and 286–287 (IY).

This sequence belongs to the zinc-containing alcohol dehydrogenase family. As to quaternary structure, homotetramer. It depends on Zn(2+) as a cofactor.

It localises to the cytoplasm. The catalysed reaction is L-threonine + NAD(+) = (2S)-2-amino-3-oxobutanoate + NADH + H(+). It functions in the pathway amino-acid degradation; L-threonine degradation via oxydo-reductase pathway; glycine from L-threonine: step 1/2. Its function is as follows. Catalyzes the NAD(+)-dependent oxidation of L-threonine to 2-amino-3-ketobutyrate. The sequence is that of L-threonine 3-dehydrogenase from Photorhabdus laumondii subsp. laumondii (strain DSM 15139 / CIP 105565 / TT01) (Photorhabdus luminescens subsp. laumondii).